A 325-amino-acid polypeptide reads, in one-letter code: Aquaporin-8 (325 aa).

Over 1 to 10 (MALRSPARDY) the chain is Cytoplasmic. A helical transmembrane segment spans residues 11–31 (LVSMIGELVGTFLFLFFAFAA). Topologically, residues 32 to 52 (AQTANQPNGTKPLTPNATDTS) are extracellular. Residues Asn39 and Asn47 are each glycosylated (N-linked (GlcNAc...) asparagine). A helical transmembrane segment spans residues 53–73 (KLLYIALAFGASLAANVWVFF). Topologically, residues 74–100 (RVSGGQFNPAVTLALVLIRAVSPTKAL) are cytoplasmic. An NPA 1 motif is present at residues 81 to 83 (NPA). A helical membrane pass occupies residues 101 to 121 (ILIPAQLVGGSLAAAAVKGII). At 122–140 (PGDDILFAVSLGPGVANVQ) the chain is on the extracellular side. Residues 141 to 161 (GLFIELLLTFMLVFTILMLVA) traverse the membrane as a helical segment. The Cytoplasmic segment spans residues 162–167 (EKTKST). Residues 168–188 (FVAPIGIGFSLFIGHLVGIFW) traverse the membrane as a helical segment. Residues 189–212 (TGAGINPARAFSPALIQASFPSYH) lie on the Extracellular side of the membrane. Residues 194 to 196 (NPA) carry the NPA 2 motif. Residues 213–233 (WIYWLGPALGSFLAAGLYLGL) traverse the membrane as a helical segment. Over 234–325 (KEMKYELVGG…GSPDSTDLPT (92 aa)) the chain is Cytoplasmic. Disordered stretches follow at residues 279–298 (LGQF…LERG) and 305–325 (EDDP…DLPT). Residues 286-298 (TEGHRSPVDLERG) are compositionally biased toward basic and acidic residues.

Belongs to the MIP/aquaporin (TC 1.A.8) family.

It is found in the cell membrane. The catalysed reaction is H2O2(out) = H2O2(in). The enzyme catalyses H2O(in) = H2O(out). Functionally, plasma membrane water channel that regulates the reactive oxygen species (ROS)-signaling pathway through its capacity to act as a membrane channel for hydrogen peroxide uptake. Required for the formation of infection structures and infection, especially on host leaves where it is essential for the penetration into the host. Regulates the expression of proteins related to redox-regulation and intracellular signal transduction and plays a role in the distribution of mitochondria in the hyphae. This chain is Aquaporin-8, found in Botryotinia fuckeliana (strain B05.10) (Noble rot fungus).